The chain runs to 392 residues: Homoserine O-acetyltransferase (392 aa).

One can recognise an AB hydrolase-1 domain in the interval 52-356 (NVVVVLHALT…ICGHDGFLVE (305 aa)). The Nucleophile role is filled by Ser157. Arg227 provides a ligand contact to substrate. Active-site residues include Asp320 and His350. Substrate is bound at residue Asp351. Positions 373–392 (SQSAGPGGAGPGSRKGTTRR) are disordered.

This sequence belongs to the AB hydrolase superfamily. MetX family. As to quaternary structure, homodimer.

Its subcellular location is the cytoplasm. The enzyme catalyses L-homoserine + acetyl-CoA = O-acetyl-L-homoserine + CoA. The protein operates within amino-acid biosynthesis; L-methionine biosynthesis via de novo pathway; O-acetyl-L-homoserine from L-homoserine: step 1/1. Its function is as follows. Transfers an acetyl group from acetyl-CoA to L-homoserine, forming acetyl-L-homoserine. This is Homoserine O-acetyltransferase from Mycobacterium avium (strain 104).